Reading from the N-terminus, the 92-residue chain is Trp operon repressor homolog (92 aa).

The DNA-binding element occupies 56–79 (QREVASKLGVSITKITRGAANLQD).

Belongs to the TrpR family. In terms of assembly, homodimer.

The protein localises to the cytoplasm. In terms of biological role, this protein is an aporepressor. When complexed with L-tryptophan it binds the operator region of the trp operon and prevents the initiation of transcription. The chain is Trp operon repressor homolog from Xylella fastidiosa (strain M23).